Consider the following 72-residue polypeptide: UPF0352 protein Shal_2512 (72 aa).

This sequence belongs to the UPF0352 family.

This Shewanella halifaxensis (strain HAW-EB4) protein is UPF0352 protein Shal_2512.